The sequence spans 527 residues: Peptide chain release factor 3 (527 aa).

Residues 11–278 (AKRRTFAIIS…GFVEWAPPPL (268 aa)) form the tr-type G domain. GTP-binding positions include 20-27 (SHPDAGKT), 87-91 (DTPGH), and 141-144 (NKMD).

It belongs to the TRAFAC class translation factor GTPase superfamily. Classic translation factor GTPase family. PrfC subfamily.

The protein resides in the cytoplasm. Functionally, increases the formation of ribosomal termination complexes and stimulates activities of RF-1 and RF-2. It binds guanine nucleotides and has strong preference for UGA stop codons. It may interact directly with the ribosome. The stimulation of RF-1 and RF-2 is significantly reduced by GTP and GDP, but not by GMP. The protein is Peptide chain release factor 3 of Saccharophagus degradans (strain 2-40 / ATCC 43961 / DSM 17024).